Consider the following 143-residue polypeptide: Transcriptional regulator MraZ (143 aa).

SpoVT-AbrB domains follow at residues 5 to 47 (EFQH…TLTE) and 76 to 119 (AVEV…DRKL).

This sequence belongs to the MraZ family. In terms of assembly, forms oligomers.

It localises to the cytoplasm. Its subcellular location is the nucleoid. This Macrococcus caseolyticus (strain JCSC5402) (Macrococcoides caseolyticum) protein is Transcriptional regulator MraZ.